The chain runs to 152 residues: Leptin (152 aa).

The signal sequence occupies residues 1 to 26; the sequence is MDHILALVLALLPLSLCVALPGALDA. A disulfide bridge connects residues Cys109 and Cys152.

The protein belongs to the leptin family. Expressed mostly in the liver.

The protein resides in the secreted. Its function is as follows. May function as part of a signaling pathway that acts to regulate the size of the body fat depot. The sequence is that of Leptin (lep) from Takifugu rubripes (Japanese pufferfish).